The following is a 339-amino-acid chain: Homocysteine S-methyltransferase 2 (339 aa).

In terms of domain architecture, Hcy-binding spans 12–326 (AVRRWVDAAG…NTIRAIHRTL (315 aa)). Zn(2+) contacts are provided by Cys244, Cys311, and Cys312.

Monomer. The cofactor is Zn(2+).

It catalyses the reaction S-methyl-L-methionine + L-homocysteine = 2 L-methionine + H(+). Its function is as follows. Catalyzes methyl transfer from S-methylmethionine (SMM) to adenosyl-L-homocysteine (AdoMet). SMM degradation (by HMT-1, HMT-2, HMT-3 and HMT-4) and biosynthesis (by MMT1) constitute the SMM cycle in plants, which is probably required to achieve short term control of AdoMet level. The polypeptide is Homocysteine S-methyltransferase 2 (HMT-2) (Zea mays (Maize)).